A 467-amino-acid chain; its full sequence is Probable citrate synthase 1, mitochondrial (467 aa).

Residues His303, His349, and Asp404 contribute to the active site.

This sequence belongs to the citrate synthase family. As to quaternary structure, homodimer.

Its subcellular location is the mitochondrion matrix. The catalysed reaction is oxaloacetate + acetyl-CoA + H2O = citrate + CoA + H(+). It functions in the pathway carbohydrate metabolism; tricarboxylic acid cycle; isocitrate from oxaloacetate: step 1/2. This is Probable citrate synthase 1, mitochondrial from Aedes aegypti (Yellowfever mosquito).